Reading from the N-terminus, the 102-residue chain is PqqA binding protein (102 aa).

The protein belongs to the PqqD family. Monomer. Interacts with PqqE.

It functions in the pathway cofactor biosynthesis; pyrroloquinoline quinone biosynthesis. Its function is as follows. Functions as a PqqA binding protein and presents PqqA to PqqE, in the pyrroloquinoline quinone (PQQ) biosynthetic pathway. This chain is PqqA binding protein, found in Rhodopseudomonas palustris (strain HaA2).